Here is a 172-residue protein sequence, read N- to C-terminus: 3-hydroxydecanoyl-[acyl-carrier-protein] dehydratase (172 aa).

The active site involves H71.

The protein belongs to the thioester dehydratase family. FabA subfamily. In terms of assembly, homodimer.

Its subcellular location is the cytoplasm. The enzyme catalyses a (3R)-hydroxyacyl-[ACP] = a (2E)-enoyl-[ACP] + H2O. It carries out the reaction (3R)-hydroxydecanoyl-[ACP] = (2E)-decenoyl-[ACP] + H2O. The catalysed reaction is (2E)-decenoyl-[ACP] = (3Z)-decenoyl-[ACP]. It participates in lipid metabolism; fatty acid biosynthesis. Functionally, necessary for the introduction of cis unsaturation into fatty acids. Catalyzes the dehydration of (3R)-3-hydroxydecanoyl-ACP to E-(2)-decenoyl-ACP and then its isomerization to Z-(3)-decenoyl-ACP. Can catalyze the dehydratase reaction for beta-hydroxyacyl-ACPs with saturated chain lengths up to 16:0, being most active on intermediate chain length. This Escherichia coli O139:H28 (strain E24377A / ETEC) protein is 3-hydroxydecanoyl-[acyl-carrier-protein] dehydratase.